The chain runs to 76 residues: Secreted RxLR effector protein 31 (76 aa).

Positions 1-24 (MRHCACLFHLFLIGFLCNVYFSAC) are cleaved as a signal peptide. A RxLR-dEER motif is present at residues 49–64 (RILRANDSEFLLTEER). N-linked (GlcNAc...) asparagine glycosylation occurs at Asn-54.

It belongs to the RxLR effector family.

It localises to the secreted. The protein resides in the host nucleus. The protein localises to the host cytoplasm. In terms of biological role, secreted effector that dos not suppress the host cell death induced by cell death-inducing proteins. In Plasmopara viticola (Downy mildew of grapevine), this protein is Secreted RxLR effector protein 31.